Reading from the N-terminus, the 308-residue chain is tRNA pseudouridine synthase B (308 aa).

Catalysis depends on Asp49, which acts as the Nucleophile.

The protein belongs to the pseudouridine synthase TruB family. Type 1 subfamily.

The catalysed reaction is uridine(55) in tRNA = pseudouridine(55) in tRNA. In terms of biological role, responsible for synthesis of pseudouridine from uracil-55 in the psi GC loop of transfer RNAs. In Nitrosococcus oceani (strain ATCC 19707 / BCRC 17464 / JCM 30415 / NCIMB 11848 / C-107), this protein is tRNA pseudouridine synthase B.